A 254-amino-acid chain; its full sequence is MFFKKNLTTAAICAALSVAAFSAMATDSTDTELTIIGEYTPGACTPVVTGGGIVDYGKHHNSALNPTGKSNKLVQLGRKNSTLNITCTAPTLIAVTSKDNRQSTIVALNDTSYIEKAYDTLVDMKGTKNAFGLGSAPNGQKIGAASIGIDRSNGGIHAADDTGEIPVDLIQTDHWSAATPTWKASSNGAFCSLTSCSAIERGYSVAKTGELTPVAITAVTFPLLIDAAVNDNTILGSDETIKLDGNVTISVQYL.

The signal sequence occupies residues 1–25 (MFFKKNLTTAAICAALSVAAFSAMA). Residues 213-229 (PVAITAVTFPLLIDAAV) traverse the membrane as a helical segment.

It to E.coli YhcF.

It localises to the cell membrane. Involved in induction of the so-called NTR enzymes in response to nitrogen deprivation, as well as in glutamate biosynthesis. May mediate the glutamate-dependent repression of the GLT operon. This is Protein GltF (gltF) from Escherichia coli (strain K12).